Here is a 62-residue protein sequence, read N- to C-terminus: Large ribosomal subunit protein bL28 (62 aa).

The protein belongs to the bacterial ribosomal protein bL28 family.

In Acholeplasma laidlawii (strain PG-8A), this protein is Large ribosomal subunit protein bL28.